The chain runs to 53 residues: Large ribosomal subunit protein bL33A (53 aa).

Belongs to the bacterial ribosomal protein bL33 family.

This Mycoplasma pneumoniae (strain ATCC 29342 / M129 / Subtype 1) (Mycoplasmoides pneumoniae) protein is Large ribosomal subunit protein bL33A (rpmG1).